The chain runs to 362 residues: N5-carboxyaminoimidazole ribonucleotide synthase (362 aa).

ATP-binding positions include R85, K125, 130-136, 158-161, E166, and 244-245; these read GYDGRGQ, EKFI, and NE. In terms of domain architecture, ATP-grasp spans 89 to 274; it reads KSLLDELNLS…QFELHLRALL (186 aa).

This sequence belongs to the PurK/PurT family. As to quaternary structure, homodimer.

It catalyses the reaction 5-amino-1-(5-phospho-beta-D-ribosyl)imidazole + hydrogencarbonate + ATP = 5-carboxyamino-1-(5-phospho-D-ribosyl)imidazole + ADP + phosphate + 2 H(+). The protein operates within purine metabolism; IMP biosynthesis via de novo pathway; 5-amino-1-(5-phospho-D-ribosyl)imidazole-4-carboxylate from 5-amino-1-(5-phospho-D-ribosyl)imidazole (N5-CAIR route): step 1/2. Its function is as follows. Catalyzes the ATP-dependent conversion of 5-aminoimidazole ribonucleotide (AIR) and HCO(3)(-) to N5-carboxyaminoimidazole ribonucleotide (N5-CAIR). The polypeptide is N5-carboxyaminoimidazole ribonucleotide synthase (Haemophilus influenzae (strain ATCC 51907 / DSM 11121 / KW20 / Rd)).